Consider the following 262-residue polypeptide: Acyl-[acyl-carrier-protein]--UDP-N-acetylglucosamine O-acyltransferase (262 aa).

The protein belongs to the transferase hexapeptide repeat family. LpxA subfamily. As to quaternary structure, homotrimer.

The protein resides in the cytoplasm. It catalyses the reaction a (3R)-hydroxyacyl-[ACP] + UDP-N-acetyl-alpha-D-glucosamine = a UDP-3-O-[(3R)-3-hydroxyacyl]-N-acetyl-alpha-D-glucosamine + holo-[ACP]. It functions in the pathway glycolipid biosynthesis; lipid IV(A) biosynthesis; lipid IV(A) from (3R)-3-hydroxytetradecanoyl-[acyl-carrier-protein] and UDP-N-acetyl-alpha-D-glucosamine: step 1/6. Functionally, involved in the biosynthesis of lipid A, a phosphorylated glycolipid that anchors the lipopolysaccharide to the outer membrane of the cell. The polypeptide is Acyl-[acyl-carrier-protein]--UDP-N-acetylglucosamine O-acyltransferase (Burkholderia mallei (strain NCTC 10247)).